An 876-amino-acid chain; its full sequence is Paramyosin (876 aa).

The nonhelical region stretch occupies residues Met1–Asp28. A coiled-coil region spans residues Leu29–Thr855. The nonhelical region stretch occupies residues Thr856–Tyr876.

It belongs to the paramyosin family. In terms of assembly, homodimer.

The protein localises to the cytoplasm. The protein resides in the myofibril. Functionally, paramyosin is a major structural component of many thick filaments isolated from invertebrate muscles. The chain is Paramyosin from Sarcoptes scabiei (Itch mite).